A 140-amino-acid polypeptide reads, in one-letter code: Large ribosomal subunit protein uL3 (140 aa).

This sequence belongs to the universal ribosomal protein uL3 family. As to quaternary structure, part of the 50S ribosomal subunit. Forms a cluster with proteins L14 and L19.

Its function is as follows. One of the primary rRNA binding proteins, it binds directly near the 3'-end of the 23S rRNA, where it nucleates assembly of the 50S subunit. The sequence is that of Large ribosomal subunit protein uL3 (rplC) from Planobispora rosea.